A 535-amino-acid chain; its full sequence is EGF domain-specific O-linked N-acetylglucosamine transferase (535 aa).

The N-terminal stretch at 1–16 (MFILLMFVLLLQEILA) is a signal peptide. 2 N-linked (GlcNAc...) asparagine glycosylation sites follow: asparagine 22 and asparagine 271. The Required for optimal activity signature appears at 303-305 (DYD). Residues asparagine 362 and asparagine 501 are each glycosylated (N-linked (GlcNAc...) asparagine).

This sequence belongs to the glycosyltransferase 61 family.

The protein localises to the endoplasmic reticulum lumen. It carries out the reaction L-seryl-[protein] + UDP-N-acetyl-alpha-D-glucosamine = 3-O-(N-acetyl-beta-D-glucosaminyl)-L-seryl-[protein] + UDP + H(+). It catalyses the reaction L-threonyl-[protein] + UDP-N-acetyl-alpha-D-glucosamine = 3-O-(N-acetyl-beta-D-glucosaminyl)-L-threonyl-[protein] + UDP + H(+). Functionally, catalyzes the transfer of a single N-acetylglucosamine from UDP-GlcNAc to a serine or threonine residue in extracellular proteins resulting in their modification with a beta-linked N-acetylglucosamine (O-GlcNAc). Specifically glycosylates the Thr residue located between the fifth and sixth conserved cysteines of folded EGF-like domains. The sequence is that of EGF domain-specific O-linked N-acetylglucosamine transferase (EOGT) from Gallus gallus (Chicken).